Here is a 200-residue protein sequence, read N- to C-terminus: MTAPVKLAIVFYSSTGTGYAMAQEAAEAGRAAGAEVRLLKVRETAPQDVIDGQDAWKANIEAMKDVPEATPADLEWAEAIVFSSPTRFGGATSQMRAFIDTLGGLWSSGKLANKTFSAMTSAQNVNGGQETTLQTLYMTAMHWGAVLTPPGYTDEVIFKSGGNPYGASVTANGQPLLENDRASIRHQVRRQVELTAKLLG.

One can recognise a Flavodoxin-like domain in the interval 7–199 (LAIVFYSSTG…RQVELTAKLL (193 aa)). FMN-binding positions include 13–18 (SSTGTG), 86–88 (TRF), 121–127 (SAQNVNG), and histidine 142.

It belongs to the WrbA family. In terms of assembly, homotetramer. Requires FMN as cofactor.

It carries out the reaction a quinone + NADH + H(+) = a quinol + NAD(+). The enzyme catalyses a quinone + NADPH + H(+) = a quinol + NADP(+). The protein is NAD(P)H dehydrogenase (quinone) of Deinococcus radiodurans (strain ATCC 13939 / DSM 20539 / JCM 16871 / CCUG 27074 / LMG 4051 / NBRC 15346 / NCIMB 9279 / VKM B-1422 / R1).